Consider the following 331-residue polypeptide: Hyaluronidase (331 aa).

2 disulfide bridges follow: cysteine 19/cysteine 308 and cysteine 185/cysteine 197. The N-linked (GlcNAc...) asparagine glycan is linked to asparagine 79. The active-site Proton donor is glutamate 109. Asparagine 325 is a glycosylation site (N-linked (GlcNAc...) asparagine).

It belongs to the glycosyl hydrolase 56 family. In terms of tissue distribution, expressed by the venom gland.

It localises to the secreted. The enzyme catalyses Random hydrolysis of (1-&gt;4)-linkages between N-acetyl-beta-D-glucosamine and D-glucuronate residues in hyaluronate.. Functionally, hydrolyzes high molecular weight hyaluronic acid to produce small oligosaccharides. The protein is Hyaluronidase of Dolichovespula maculata (Bald-faced hornet).